We begin with the raw amino-acid sequence, 139 residues long: Antitoxin HicB 2 (139 aa).

Residues 87–137 (MLQTRTSNAELARLLGTRPQEIQRIVSLSHSTKIDTIANALNALGKHLELV) form the HTH cro/C1-type domain. Positions 96–113 (ELARLLGTRPQEIQRIVS) form a DNA-binding region, H-T-H motif.

This sequence belongs to the HicB antitoxin family. As to quaternary structure, probably forms a complex with the probable mRNA interferase HicA2 (its cognate toxin); when complexed with HicA inhibits the toxin activity.

Its function is as follows. Antitoxin component of a type II toxin-antitoxin (TA) system. Functions as an mRNA interferase antitoxin preventing effects of the HicA 2 toxin. This chain is Antitoxin HicB 2 (hicB2), found in Photorhabdus laumondii subsp. laumondii (strain DSM 15139 / CIP 105565 / TT01) (Photorhabdus luminescens subsp. laumondii).